An 822-amino-acid polypeptide reads, in one-letter code: Pentatricopeptide repeat-containing protein At2g41720 (822 aa).

The segment at 1–28 (MATVTNFKLVTPPESSRADKPGATKASD) is disordered. PPR repeat units follow at residues 106–136 (ARKN…MKIQ), 142–176 (RNDI…SCKP), 177–211 (DAET…AIAP), 212–246 (SRST…GVGP), 247–281 (DLVT…KVRP), 282–316 (DTTT…RAEC), 319–353 (DVVT…GLKP), 354–388 (NIVS…GIIP), 389–423 (DVVS…RRKP), 424–458 (NVVT…GIKP), 459–493 (NVVS…GINL), 494–528 (NTAA…KVKA), 529–563 (DSVT…SIPL), 564–598 (TKEV…GCEP), 599–633 (DVIA…GIEP), 634–668 (DSIA…EIPF), 669–699 (TGAV…MDPY), 704–738 (SIGL…GVGI), and 739–773 (NLKT…GIQP).

Belongs to the PPR family. P subfamily.

The protein is Pentatricopeptide repeat-containing protein At2g41720 (EMB2654) of Arabidopsis thaliana (Mouse-ear cress).